A 417-amino-acid polypeptide reads, in one-letter code: UDP-N-acetylglucosamine 1-carboxyvinyltransferase (417 aa).

22 to 23 (KN) lines the phosphoenolpyruvate pocket. Arginine 93 lines the UDP-N-acetyl-alpha-D-glucosamine pocket. The active-site Proton donor is cysteine 117. Residue cysteine 117 is modified to 2-(S-cysteinyl)pyruvic acid O-phosphothioketal. Residues 122-126 (RPVDQ), aspartate 304, and isoleucine 326 contribute to the UDP-N-acetyl-alpha-D-glucosamine site.

This sequence belongs to the EPSP synthase family. MurA subfamily.

The protein localises to the cytoplasm. The catalysed reaction is phosphoenolpyruvate + UDP-N-acetyl-alpha-D-glucosamine = UDP-N-acetyl-3-O-(1-carboxyvinyl)-alpha-D-glucosamine + phosphate. Its pathway is cell wall biogenesis; peptidoglycan biosynthesis. In terms of biological role, cell wall formation. Adds enolpyruvyl to UDP-N-acetylglucosamine. This is UDP-N-acetylglucosamine 1-carboxyvinyltransferase from Neisseria meningitidis serogroup B (strain ATCC BAA-335 / MC58).